Consider the following 395-residue polypeptide: Biotin biosynthesis cytochrome P450 (395 aa).

Arg60 contributes to the substrate binding site. 89-93 (HRRLR) contacts heme. 169-173 (IDFTR) serves as a coordination point for substrate. Cys250 and Cys275 are oxidised to a cystine. 285–287 (TAR) lines the heme pocket. Residue Tyr307 participates in substrate binding. Heme contacts are provided by residues 343–345 (HVC) and Cys345.

The cofactor is heme.

The enzyme catalyses a C2-C8-saturated long-chain fatty acyl-[ACP] + 2 reduced [flavodoxin] + 3 O2 = 6-carboxyhexanoyl-[ACP] + a fatty aldehyde + 2 oxidized [flavodoxin] + 3 H2O + 3 H(+). Its pathway is cofactor biosynthesis; biotin biosynthesis. Catalyzes the C-C bond cleavage of fatty acid linked to acyl carrier protein (ACP) to generate pimelic acid for biotin biosynthesis. It has high affinity for long-chain fatty acids with the greatest affinity for myristic acid. The chain is Biotin biosynthesis cytochrome P450 (bioI) from Bacillus subtilis (strain 168).